Here is a 149-residue protein sequence, read N- to C-terminus: Large ribosomal subunit protein uL15 (149 aa).

The tract at residues 1 to 54 (MSLKLHNLKPTPNSRPEKHRKGRGHAAGKGKQAGKGQSGQNKRKGHRLGFEGGQ) is disordered. Basic residues predominate over residues 17 to 28 (EKHRKGRGHAAG).

It belongs to the universal ribosomal protein uL15 family. As to quaternary structure, part of the 50S ribosomal subunit.

Functionally, binds to the 23S rRNA. This chain is Large ribosomal subunit protein uL15, found in Mycoplasmopsis synoviae (strain 53) (Mycoplasma synoviae).